The primary structure comprises 515 residues: Endoglucanase 2 (515 aa).

The first 31 residues, Met-1–Thr-31, serve as a signal peptide directing secretion. N-linked (GlcNAc...) asparagine glycosylation occurs at Asn-37. Catalysis depends on Asp-100, which acts as the Nucleophile. Asn-250 carries N-linked (GlcNAc...) asparagine glycosylation. The active site involves His-433. The N-linked (GlcNAc...) asparagine glycan is linked to Asn-475. Residue Asp-480 is part of the active site. The N-linked (GlcNAc...) asparagine glycan is linked to Asn-483. The active site involves Glu-489.

It belongs to the glycosyl hydrolase 9 (cellulase E) family.

It is found in the secreted. The enzyme catalyses Endohydrolysis of (1-&gt;4)-beta-D-glucosidic linkages in cellulose, lichenin and cereal beta-D-glucans.. The protein is Endoglucanase 2 of Arabidopsis thaliana (Mouse-ear cress).